The sequence spans 470 residues: 3-isopropylmalate dehydratase large subunit (470 aa).

The [4Fe-4S] cluster site is built by C351, C411, and C414.

Belongs to the aconitase/IPM isomerase family. LeuC type 1 subfamily. Heterodimer of LeuC and LeuD. [4Fe-4S] cluster serves as cofactor.

The catalysed reaction is (2R,3S)-3-isopropylmalate = (2S)-2-isopropylmalate. It functions in the pathway amino-acid biosynthesis; L-leucine biosynthesis; L-leucine from 3-methyl-2-oxobutanoate: step 2/4. In terms of biological role, catalyzes the isomerization between 2-isopropylmalate and 3-isopropylmalate, via the formation of 2-isopropylmaleate. The polypeptide is 3-isopropylmalate dehydratase large subunit (Rhodopseudomonas palustris (strain BisB5)).